The following is a 408-amino-acid chain: Histidine--tRNA ligase (408 aa).

The protein belongs to the class-II aminoacyl-tRNA synthetase family.

It localises to the cytoplasm. The enzyme catalyses tRNA(His) + L-histidine + ATP = L-histidyl-tRNA(His) + AMP + diphosphate + H(+). In Methanospirillum hungatei JF-1 (strain ATCC 27890 / DSM 864 / NBRC 100397 / JF-1), this protein is Histidine--tRNA ligase.